A 171-amino-acid chain; its full sequence is Peptide deformylase (171 aa).

Residues cysteine 92 and histidine 134 each coordinate Fe cation. The active site involves glutamate 135. Histidine 138 contacts Fe cation.

This sequence belongs to the polypeptide deformylase family. Fe(2+) is required as a cofactor.

The enzyme catalyses N-terminal N-formyl-L-methionyl-[peptide] + H2O = N-terminal L-methionyl-[peptide] + formate. In terms of biological role, removes the formyl group from the N-terminal Met of newly synthesized proteins. Requires at least a dipeptide for an efficient rate of reaction. N-terminal L-methionine is a prerequisite for activity but the enzyme has broad specificity at other positions. In Polynucleobacter necessarius subsp. necessarius (strain STIR1), this protein is Peptide deformylase.